A 517-amino-acid polypeptide reads, in one-letter code: Protein disulfide-isomerase A5 (517 aa).

Residues 1–21 (MARAWGLLLAIGVVLPTWLSS) form the signal peptide. 4 disulfide bridges follow: Cys-83-Cys-92, Cys-180-Cys-183, Cys-303-Cys-306, and Cys-424-Cys-427. Thioredoxin domains lie at 132-259 (FLKD…NPLP), 268-382 (PWAD…NPEA), and 376-504 (WMQN…TLRE). The Prevents secretion from ER motif lies at 514–517 (REEL).

It belongs to the protein disulfide isomerase family. Interacts with CALR (via P-domain).

The protein resides in the endoplasmic reticulum lumen. The enzyme catalyses Catalyzes the rearrangement of -S-S- bonds in proteins.. The sequence is that of Protein disulfide-isomerase A5 (Pdia5) from Mus musculus (Mouse).